The sequence spans 371 residues: Peptide chain release factor 2 (371 aa).

N5-methylglutamine is present on Gln-251.

Belongs to the prokaryotic/mitochondrial release factor family. Post-translationally, methylated by PrmC. Methylation increases the termination efficiency of RF2.

It is found in the cytoplasm. Its function is as follows. Peptide chain release factor 2 directs the termination of translation in response to the peptide chain termination codons UGA and UAA. The protein is Peptide chain release factor 2 of Arthrobacter sp. (strain FB24).